A 319-amino-acid polypeptide reads, in one-letter code: Alpha-hemolysin (319 aa).

A signal peptide spans 1 to 26 (MKTRIVSSVTTTLLLGSILMNPVANA).

The protein belongs to the aerolysin family. Self-assembles to form first a non-lytic oligomeric intermediate and then, a mushroom-shaped homoheptamer structure of 100 Angstroms in length and up to 100 Angstroms in diameter.

Its subcellular location is the secreted. In terms of biological role, alpha-toxin binds to the membrane of eukaryotic cells resulting in the release of low-molecular weight molecules and leading to an eventual osmotic lysis. Inhibits host neutrophil chemotaxis to the lesion region. Heptamer oligomerization and pore formation is required for lytic activity. The protein is Alpha-hemolysin (hly) of Staphylococcus aureus (strain NCTC 8325 / PS 47).